We begin with the raw amino-acid sequence, 848 residues long: DNA mismatch repair protein MutS (848 aa).

605-612 (GPNMAGKS) is an ATP binding site.

This sequence belongs to the DNA mismatch repair MutS family.

Its function is as follows. This protein is involved in the repair of mismatches in DNA. It is possible that it carries out the mismatch recognition step. This protein has a weak ATPase activity. This is DNA mismatch repair protein MutS from Leptospira interrogans serogroup Icterohaemorrhagiae serovar Lai (strain 56601).